A 1350-amino-acid polypeptide reads, in one-letter code: Protein transport protein SEC16A homolog (1350 aa).

Disordered regions lie at residues Y26–S45, L73–P97, M964–V1063, A1118–I1216, and Q1235–L1350. Residues K35–S45 are compositionally biased toward basic and acidic residues. S43 carries the post-translational modification Phosphoserine. A compositionally biased stretch (polar residues) spans H970–S1002. Low complexity predominate over residues S1150–P1168. Polar residues-rich tracts occupy residues T1195–Q1210 and R1289–N1316. A compositionally biased stretch (low complexity) spans S1317–E1343.

This sequence belongs to the SEC16 family. As to quaternary structure, interacts with SEC13A, SEC13B and SEC31A.

It localises to the golgi apparatus. It is found in the golgi stack. Its subcellular location is the endoplasmic reticulum. Required for efficient protein export from the endoplasmic reticulum (ER) to the Golgi by regulating COPII coat dynamics at the ER. Functions as a scaffold and regulator of COPII coat assembly at ER exit sites. The protein is Protein transport protein SEC16A homolog of Arabidopsis thaliana (Mouse-ear cress).